We begin with the raw amino-acid sequence, 145 residues long: MYLLQISISLLLLISTAATALPLSTPLIPLLDTLINITITASTLNSAPPTALTTTTHSLECADVNQGALVCCPSIVDGDQPVVVMAAKMFGFVLNGNSVNGVGCRTIYNGAYCPVLEHRLCCQVTDLMVLPLVSLAMWCHRAEEL.

The first 20 residues, 1–20 (MYLLQISISLLLLISTAATA), serve as a signal peptide directing secretion. N36 is a glycosylation site (N-linked (GlcNAc...) asparagine). 4 disulfide bridges follow: C61-C121, C71-C113, C72-C104, and C122-C139.

It is found in the secreted. The protein resides in the cell wall. Aerial growth, conidiation, and dispersal of filamentous fungi in the environment rely upon a capability of their secreting small amphipathic proteins called hydrophobins (HPBs) with low sequence identity. Class I can self-assemble into an outermost layer of rodlet bundles on aerial cell surfaces, conferring cellular hydrophobicity that supports fungal growth, development and dispersal; whereas Class II form highly ordered films at water-air interfaces through intermolecular interactions but contribute nothing to the rodlet structure. In Botryotinia fuckeliana, hydrophobins are not involved in conferring surface hydrophobicity to conidia and aerial hyphae and their function in sclerotia and fruiting bodies remains to be investigated. The sequence is that of Hydrophobin-like protein 1 from Botryotinia fuckeliana (strain B05.10) (Noble rot fungus).